A 432-amino-acid polypeptide reads, in one-letter code: UPF0597 protein APJL_1638 (432 aa).

This sequence belongs to the UPF0597 family.

The protein is UPF0597 protein APJL_1638 of Actinobacillus pleuropneumoniae serotype 3 (strain JL03).